We begin with the raw amino-acid sequence, 157 residues long: 2-C-methyl-D-erythritol 2,4-cyclodiphosphate synthase (157 aa).

A divalent metal cation is bound by residues Asp-8 and His-10. 4-CDP-2-C-methyl-D-erythritol 2-phosphate-binding positions include 8–10 and 34–35; these read DIH and HS. A divalent metal cation is bound at residue His-42. Residues 56 to 58 and 132 to 135 contribute to the 4-CDP-2-C-methyl-D-erythritol 2-phosphate site; these read DIG and TTNE.

The protein belongs to the IspF family. In terms of assembly, homotrimer. It depends on a divalent metal cation as a cofactor.

The enzyme catalyses 4-CDP-2-C-methyl-D-erythritol 2-phosphate = 2-C-methyl-D-erythritol 2,4-cyclic diphosphate + CMP. It functions in the pathway isoprenoid biosynthesis; isopentenyl diphosphate biosynthesis via DXP pathway; isopentenyl diphosphate from 1-deoxy-D-xylulose 5-phosphate: step 4/6. Its function is as follows. Involved in the biosynthesis of isopentenyl diphosphate (IPP) and dimethylallyl diphosphate (DMAPP), two major building blocks of isoprenoid compounds. Catalyzes the conversion of 4-diphosphocytidyl-2-C-methyl-D-erythritol 2-phosphate (CDP-ME2P) to 2-C-methyl-D-erythritol 2,4-cyclodiphosphate (ME-CPP) with a corresponding release of cytidine 5-monophosphate (CMP). This is 2-C-methyl-D-erythritol 2,4-cyclodiphosphate synthase from Synechococcus sp. (strain JA-3-3Ab) (Cyanobacteria bacterium Yellowstone A-Prime).